A 282-amino-acid chain; its full sequence is Orotidine 5'-phosphate decarboxylase (282 aa).

Catalysis depends on K95, which acts as the Proton donor.

This sequence belongs to the OMP decarboxylase family. Type 2 subfamily.

The enzyme catalyses orotidine 5'-phosphate + H(+) = UMP + CO2. Its pathway is pyrimidine metabolism; UMP biosynthesis via de novo pathway; UMP from orotate: step 2/2. This is Orotidine 5'-phosphate decarboxylase (pyrF) from Mycobacterium leprae (strain TN).